A 175-amino-acid chain; its full sequence is Small ribosomal subunit protein uS5 (175 aa).

Positions 11 to 74 (LSEVLVDVNR…QAAKKRMMKV (64 aa)) constitute an S5 DRBM domain.

The protein belongs to the universal ribosomal protein uS5 family. Part of the 30S ribosomal subunit. Contacts proteins S4 and S8.

With S4 and S12 plays an important role in translational accuracy. In terms of biological role, located at the back of the 30S subunit body where it stabilizes the conformation of the head with respect to the body. The sequence is that of Small ribosomal subunit protein uS5 from Rickettsia prowazekii (strain Madrid E).